Reading from the N-terminus, the 356-residue chain is Peptide chain release factor 1 (356 aa).

Glutamine 233 carries the post-translational modification N5-methylglutamine.

It belongs to the prokaryotic/mitochondrial release factor family. In terms of processing, methylated by PrmC. Methylation increases the termination efficiency of RF1.

The protein localises to the cytoplasm. Its function is as follows. Peptide chain release factor 1 directs the termination of translation in response to the peptide chain termination codons UAG and UAA. The chain is Peptide chain release factor 1 (prfA) from Bacillus subtilis (strain 168).